We begin with the raw amino-acid sequence, 448 residues long: tRNA modification GTPase MnmE (448 aa).

(6S)-5-formyl-5,6,7,8-tetrahydrofolate is bound by residues Arg24, Glu81, and Lys120. One can recognise a TrmE-type G domain in the interval 216-373 (GLNVVLVGAP…LKRTLLREAG (158 aa)). Asn226 contributes to the K(+) binding site. GTP contacts are provided by residues 226 to 231 (NVGKSS), 245 to 251 (TDIAGTT), and 270 to 273 (DTAG). Ser230 provides a ligand contact to Mg(2+). K(+) is bound by residues Thr245, Ile247, and Thr250. Thr251 is a Mg(2+) binding site. Lys448 lines the (6S)-5-formyl-5,6,7,8-tetrahydrofolate pocket.

This sequence belongs to the TRAFAC class TrmE-Era-EngA-EngB-Septin-like GTPase superfamily. TrmE GTPase family. In terms of assembly, homodimer. Heterotetramer of two MnmE and two MnmG subunits. K(+) serves as cofactor.

It localises to the cytoplasm. Exhibits a very high intrinsic GTPase hydrolysis rate. Involved in the addition of a carboxymethylaminomethyl (cmnm) group at the wobble position (U34) of certain tRNAs, forming tRNA-cmnm(5)s(2)U34. The sequence is that of tRNA modification GTPase MnmE from Neisseria meningitidis serogroup C / serotype 2a (strain ATCC 700532 / DSM 15464 / FAM18).